The primary structure comprises 323 residues: uncharacterized protein (323 aa).

Residues 1 to 142 (MPSVFFSYSH…QVAKAVREAA (142 aa)) form the TIR domain.

This is an uncharacterized protein from Sinorhizobium fredii (strain NBRC 101917 / NGR234).